Consider the following 243-residue polypeptide: uncharacterized protein (243 aa).

The disordered stretch occupies residues 157–181 (SEETKEQPDATTSEKSRSPECPKTT).

This is an uncharacterized protein from Rattus norvegicus (Rat).